A 176-amino-acid polypeptide reads, in one-letter code: Calcium and integrin-binding family member 2 (176 aa).

3 consecutive EF-hand domains span residues 55–90, 92–127, and 133–168; these read RENPFKERIVEAFSEDGEGNLTFNDFVDMFSVLCES, PRDLKASYAFKIYDFNTDNFICKEDLQLTLARLTKS, and EVVLVCDKVIEEADLDGDGKLGFADFEDMIAKAPDF. Ca(2+) contacts are provided by D105, N107, D109, D116, D146, D148, D150, K152, and D157.

Monomer. Homodimer. Interacts with WHRN and MYO7A. Interacts with ITGA2B (via C-terminus cytoplasmic tail region); the interactions are stabilized/increased in a calcium and magnesium-dependent manner. Interacts with ITGA7 (via C-terminus cytoplasmic tail region); the interactions are stabilized/increased in a calcium and magnesium-dependent manner. Interacts with TMC1. Interacts with TMC2. As to expression, expressed in liver, heart, kidney, brain, spleen, stomach, ovary, testis and muscle.

It localises to the cytoplasm. The protein localises to the cell projection. The protein resides in the stereocilium. Its subcellular location is the photoreceptor inner segment. It is found in the cilium. It localises to the photoreceptor outer segment. The protein localises to the cell membrane. The protein resides in the sarcolemma. Calcium- and integrin-binding protein that plays a role in intracellular calcium homeostasis. Acts as an auxiliary subunit of the sensory mechanoelectrical transduction (MET) channel in hair cells. Essential for mechanoelectrical transduction (MET) currents in auditory hair cells and thereby required for hearing. Regulates the function of hair cell mechanotransduction by controlling the distribution of transmembrane channel-like proteins TMC1 and TMC2, and by regulating the function of the MET channels in hair cells. Required for the maintenance of auditory hair cell stereocilia bundle morphology and function and for hair-cell survival in the cochlea. Critical for proper photoreceptor cell maintenance and function. Plays a role in intracellular calcium homeostasis by decreasing ATP-induced calcium release. The chain is Calcium and integrin-binding family member 2 (CIB2) from Ovis aries (Sheep).